Consider the following 1777-residue polypeptide: Non-reducing polyketide synthase nscA (1777 aa).

The tract at residues 27 to 261 (DLFRRLDQHS…PLPVYDGLCH (235 aa)) is N-terminal acylcarrier protein transacylase domain (SAT). Residues 396-829 (SSKLAIVGMA…GGNTTLLLED (434 aa)) enclose the Ketosynthase family 3 (KS3) domain. Active-site for beta-ketoacyl synthase activity residues include Cys569, His704, and His747. The segment at 934 to 1212 (AFTGQGAYYH…SAIPSCRRNE (279 aa)) is malonyl-CoA:ACP transacylase (MAT) domain. The interval 1297-1616 (TSLVHQITAE…RLLMDRFFSP (320 aa)) is product template (PT) domain. The segment at 1301-1437 (HQITAETVEA…ATIRFEDPEA (137 aa)) is N-terminal hotdog fold. Residues 1301–1611 (HQITAETVEA…FRRVPRLLMD (311 aa)) form the PKS/mFAS DH domain. The active-site Proton acceptor; for dehydratase activity is the His1333. The C-terminal hotdog fold stretch occupies residues 1465–1611 (ASRLSKPLAY…FRRVPRLLMD (147 aa)). Catalysis depends on Asp1522, which acts as the Proton donor; for dehydratase activity. Residues 1674–1704 (LLATSSKSSTPKESPIVTPAESERAEPVDNS) form a disordered region. Residues 1677–1688 (TSSKSSTPKESP) are compositionally biased toward low complexity. The region spanning 1700–1777 (PVDNSMTSQC…EMTAWIEEYC (78 aa)) is the Carrier domain. The residue at position 1737 (Ser1737) is an O-(pantetheine 4'-phosphoryl)serine.

Pantetheine 4'-phosphate is required as a cofactor.

The protein operates within secondary metabolite biosynthesis. Its function is as follows. Non-reducing polyketide synthase; part of the gene cluster that mediates the biosynthesis of neosartoricin B, a prenylated anthracenone that probably exhibits T-cell antiproliferative activity, suggestive of a physiological role as an immunosuppressive agent. The non-reducing polyketide synthase nscA probably synthesizes and cyclizes the decaketide backbone. The hydrolase nscB then mediates the product release through hydrolysis followed by spontaneous decarboxylation. The prenyltransferase nscD catalyzes the addition of the dimethylallyl group to the aromatic C5. The FAD-dependent monooxygenase nscC is then responsible for the stereospecific hydroxylation at C2. Neosartoricin B can be converted into two additional compounds neosartoricins C and D. Neosartoricin C is a spirocyclic compound that is cyclized through the attack of C3 hydroxyl on C14, followed by dehydration. On the other hand, neosartoricin D is a further cyclized compound in which attack of C2 on C14 in neosartoricin C results in the formation of the acetal-containing dioxabicyclo-octanone ring. Both of these compounds are novel and possibly represent related metabolites of the gene cluster. In Trichophyton equinum (strain ATCC MYA-4606 / CBS 127.97) (Horse ringworm fungus), this protein is Non-reducing polyketide synthase nscA.